Consider the following 580-residue polypeptide: Putative adenine deaminase YerA (580 aa).

A Phosphoserine modification is found at Ser-399.

Belongs to the metallo-dependent hydrolases superfamily. Adenine deaminase family.

The enzyme catalyses adenine + H2O + H(+) = hypoxanthine + NH4(+). The chain is Putative adenine deaminase YerA (yerA) from Bacillus subtilis (strain 168).